The following is a 1208-amino-acid chain: DNA-directed RNA polymerase subunit beta (1208 aa).

The protein belongs to the RNA polymerase beta chain family. The RNAP catalytic core consists of 2 alpha, 1 beta, 1 beta' and 1 omega subunit. When a sigma factor is associated with the core the holoenzyme is formed, which can initiate transcription.

The catalysed reaction is RNA(n) + a ribonucleoside 5'-triphosphate = RNA(n+1) + diphosphate. Functionally, DNA-dependent RNA polymerase catalyzes the transcription of DNA into RNA using the four ribonucleoside triphosphates as substrates. The chain is DNA-directed RNA polymerase subunit beta from Enterococcus faecium (Streptococcus faecium).